A 497-amino-acid polypeptide reads, in one-letter code: tRNA-2-methylthio-N(6)-dimethylallyladenosine synthase (497 aa).

Residues 1-50 (MTGTSNIPTHGKEHKDAPALLPLPAPNPHHTHAAHPGNPSHDRPPSRGKL) form a disordered region. Residues 48–165 (GKLFIKTHGC…LPDMIRARRE (118 aa)) form the MTTase N-terminal domain. 6 residues coordinate [4Fe-4S] cluster: Cys-57, Cys-94, Cys-128, Cys-202, Cys-206, and Cys-209. Positions 188–430 (RAEGPSAFVS…QKHINTYAAD (243 aa)) constitute a Radical SAM core domain. Residues 433–496 (KRMIGTVQTV…SNSLRGRVHT (64 aa)) form the TRAM domain.

This sequence belongs to the methylthiotransferase family. MiaB subfamily. Monomer. It depends on [4Fe-4S] cluster as a cofactor.

It is found in the cytoplasm. The catalysed reaction is N(6)-dimethylallyladenosine(37) in tRNA + (sulfur carrier)-SH + AH2 + 2 S-adenosyl-L-methionine = 2-methylsulfanyl-N(6)-dimethylallyladenosine(37) in tRNA + (sulfur carrier)-H + 5'-deoxyadenosine + L-methionine + A + S-adenosyl-L-homocysteine + 2 H(+). In terms of biological role, catalyzes the methylthiolation of N6-(dimethylallyl)adenosine (i(6)A), leading to the formation of 2-methylthio-N6-(dimethylallyl)adenosine (ms(2)i(6)A) at position 37 in tRNAs that read codons beginning with uridine. The polypeptide is tRNA-2-methylthio-N(6)-dimethylallyladenosine synthase (Xylella fastidiosa (strain 9a5c)).